The chain runs to 407 residues: tRNA (guanine-N(7)-)-methyltransferase non-catalytic subunit wuho (407 aa).

WD repeat units follow at residues A83–L124, G171–S210, and G214–I252.

The protein belongs to the WD repeat TRM82 family. Forms a heterodimer with the catalytic subunit Mettl1. Interacts with mei-P26 and weakly interacts with bgcn; required for the function or formation of the mei-P26-bgcn-bam-sxl complex. Interacts with nanos; may be involved in mei-P26-dependent derepression of the BMP signaling pathway. Interacts with Myc; the interaction may be mediated by mei-P26 and may be involved in the regulation of ribosome biogenesis. In testis, it is present at high level in hub cells, a niche for germline stem cells of testis. Ubiquitously expressed in all testicular cells throughout spermatogenesis. Ubiquitously expressed in all germline and somatic cells of the ovary.

It localises to the nucleus. The protein resides in the cytoplasm. Its pathway is tRNA modification; N(7)-methylguanine-tRNA biosynthesis. In terms of biological role, required for the Mettl1-dependent formation of N(7)-methylguanine at position 46 (m7G46) in tRNA. In the Mettl1-wuho methyltransferase complex, it is required to stabilize and induce conformational changes of the catalytic subunit. Required for binding of nanos mRNA and repression of translation by the mei-P26-bgcn-bam-sxl complex. May cooperate with mei-P26 and nanos to derepress the BMP signaling pathway. May cooperate with mei-P26 to suppress expression of a subset of microRNAs. May cooperate with mei-P26 to regulate bam expression levels in germline cells during gametogenesis. Required to promote mitosis to meiosis transition during gametogenesis. May regulate germline cell division in part by regulating ribosome biogenesis. This chain is tRNA (guanine-N(7)-)-methyltransferase non-catalytic subunit wuho, found in Drosophila ananassae (Fruit fly).